A 227-amino-acid chain; its full sequence is Probable cytokinin riboside 5'-monophosphate phosphoribohydrolase LOGL9 (227 aa).

Positions 1 to 15 (MYISSPHTSHFTSID) are enriched in polar residues. The disordered stretch occupies residues 1–26 (MYISSPHTSHFTSIDRSPAVVSESDR). Substrate contacts are provided by residues Glu117, 135–136 (RK), and 152–158 (GYGTLEE).

It belongs to the LOG family. In terms of tissue distribution, expressed in roots, leaves and stems.

The enzyme catalyses N(6)-(dimethylallyl)adenosine 5'-phosphate + H2O = N(6)-dimethylallyladenine + D-ribose 5-phosphate. It catalyses the reaction 9-ribosyl-trans-zeatin 5'-phosphate + H2O = trans-zeatin + D-ribose 5-phosphate. In terms of biological role, cytokinin-activating enzyme working in the direct activation pathway. Phosphoribohydrolase that converts inactive cytokinin nucleotides to the biologically active free-base forms. The sequence is that of Probable cytokinin riboside 5'-monophosphate phosphoribohydrolase LOGL9 (LOGL9) from Oryza sativa subsp. japonica (Rice).